A 935-amino-acid polypeptide reads, in one-letter code: Formin-I (935 aa).

A coiled-coil region spans residues 35-76 (QQQQQQQQQQINNENENSINNQENKENNNKDNNNNNNKEIKQ). 3 disordered regions span residues 52–78 (SINN…KQSS), 380–511 (LSSA…QLTP), and 561–590 (KEKM…QSLS). The segment covering 384 to 407 (KKQPQQQPQKDVTSSSSSSSNSSS) has biased composition (low complexity). Over residues 418 to 428 (ITTNDSSSSNP) the composition is skewed to polar residues. Basic and acidic residues predominate over residues 431–443 (DFDKLSLSSDDKV). Polar residues predominate over residues 444 to 454 (NNNNVQIENTT). The FH1 domain occupies 444 to 505 (NNNNVQIENT…KPNNSGGGGG (62 aa)). Residues 456 to 482 (SVPPPPPVGAPPPPPPPPPPPPPPPPS) show a composition bias toward pro residues. Polar residues predominate over residues 484 to 499 (LKLNRNRISTPKKPNN). Residues 506–935 (GGQLTPLQKK…SLNLSTLNSK (430 aa)) enclose the FH2 domain. Residues 568–583 (NLNNSNNNNNNNSNNN) show a composition bias toward low complexity. Coiled-coil stretches lie at residues 702–730 (SLLD…FIKV) and 803–834 (QSSL…QQLL).

Belongs to the formin homology family. Diaphanous subfamily.

In terms of biological role, formins play an important role in the nucleation of actin and the formation of linear actin filaments. This is Formin-I (forI) from Dictyostelium discoideum (Social amoeba).